The primary structure comprises 141 residues: Large ribosomal subunit protein uL11 (141 aa).

It belongs to the universal ribosomal protein uL11 family. In terms of assembly, part of the ribosomal stalk of the 50S ribosomal subunit. Interacts with L10 and the large rRNA to form the base of the stalk. L10 forms an elongated spine to which L12 dimers bind in a sequential fashion forming a multimeric L10(L12)X complex. One or more lysine residues are methylated.

Its function is as follows. Forms part of the ribosomal stalk which helps the ribosome interact with GTP-bound translation factors. This is Large ribosomal subunit protein uL11 from Limosilactobacillus fermentum (strain NBRC 3956 / LMG 18251) (Lactobacillus fermentum).